A 509-amino-acid chain; its full sequence is ATP synthase subunit alpha (509 aa).

Residue 169–176 (GDRQTGKT) coordinates ATP.

The protein belongs to the ATPase alpha/beta chains family. As to quaternary structure, F-type ATPases have 2 components, CF(1) - the catalytic core - and CF(0) - the membrane proton channel. CF(1) has five subunits: alpha(3), beta(3), gamma(1), delta(1), epsilon(1). CF(0) has three main subunits: a(1), b(2) and c(9-12). The alpha and beta chains form an alternating ring which encloses part of the gamma chain. CF(1) is attached to CF(0) by a central stalk formed by the gamma and epsilon chains, while a peripheral stalk is formed by the delta and b chains.

It is found in the cell inner membrane. It carries out the reaction ATP + H2O + 4 H(+)(in) = ADP + phosphate + 5 H(+)(out). Its function is as follows. Produces ATP from ADP in the presence of a proton gradient across the membrane. The alpha chain is a regulatory subunit. In Agrobacterium fabrum (strain C58 / ATCC 33970) (Agrobacterium tumefaciens (strain C58)), this protein is ATP synthase subunit alpha.